A 219-amino-acid chain; its full sequence is MSDEVVLLDTWASMYGMRARIALAEKGVRYEYKEENLMNRSPLLLQMNPIHKKIPVLIHNGKPICESAIIVQYIDEVWNDKSPLMPSDPYKRSQARFWVDYIDKKIYDTWKKMWLSKGEEHEEGKKELISIFKQLEETLTDKPFYGDDTFGFVDLCLITFSSWFYTYETYGNFKMEEECPKLMAWVKRCMERETVSNTLPDAKKVYGLIVELQKTLESK.

Residues aspartate 3–serine 82 enclose the GST N-terminal domain. Residues serine 13, isoleucine 54, and glutamate 66–serine 67 contribute to the glutathione site. The 129-residue stretch at aspartate 88–leucine 216 folds into the GST C-terminal domain.

Belongs to the GST superfamily. HSP26 family. As to quaternary structure, homodimer. degradation; (R)-lactate from methylglyoxal: step 1/2.

The enzyme catalyses RX + glutathione = an S-substituted glutathione + a halide anion + H(+). In terms of biological role, conjugation of reduced glutathione to a wide number of exogenous and endogenous hydrophobic electrophiles. Involved in the detoxification of certain herbicides. The chain is Glutathione S-transferase 3 (GST3) from Glycine max (Soybean).